The chain runs to 649 residues: Transmembrane and coiled-coil domains protein 1 (649 aa).

Met-1 carries the N-acetylmethionine modification. Disordered stretches follow at residues 1–37 (MEPS…LSKM), 58–83 (HQRR…EVDL), 110–166 (RVPP…PTSS), and 197–222 (LAQT…GIPD). Residues 1–587 (MEPSGSEQLY…ARNLLGKLIN (587 aa)) are Cytoplasmic-facing. Residues 20 to 34 (QDAEARRQTESEQKL) are compositionally biased toward basic and acidic residues. Polar residues predominate over residues 64-75 (SVSPHDVQQIQT). Residues 113-125 (PKMKRGTSLHSRR) are compositionally biased toward basic residues. Positions 156-166 (SSSTTDAPTSS) are enriched in low complexity. Residues 197 to 214 (LAQTSSAVASSTDGSIHT) are compositionally biased toward polar residues. A coiled-coil region spans residues 224-310 (QRTKAAIAHL…KLREVEQNGI (87 aa)). 2 positions are modified to phosphoserine: Ser-378 and Ser-410. Residues 411–433 (PKYGSEEDCSSATSGSVGANSTT) are disordered. A compositionally biased stretch (polar residues) spans 420-433 (SSATSGSVGANSTT). A coiled-coil region spans residues 457 to 566 (ALLHEVQEIR…KMELQQQQQQ (110 aa)). Transmembrane regions (helical) follow at residues 588 to 608 (ILLA…NCVV) and 621 to 641 (LFLV…FSYV). Topologically, residues 642–649 (DRLFSPPR) are cytoplasmic.

It belongs to the TEX28 family. As to quaternary structure, may form homodimers and heterodimers with TMCC2 or TMCC3 via the coiled-coil domains. Interacts with ribosomal proteins RPL4 and RPS6.

It is found in the endoplasmic reticulum membrane. In terms of biological role, endoplasmic reticulum membrane protein that promotes endoplasmic reticulum-associated endosome fission. Localizes to contact sites between the endoplasmic reticulum and endosomes and acts by promoting recruitment of the endoplasmic reticulum to endosome tubules for fission. Endosome membrane fission of early and late endosomes is essential to separate regions destined for lysosomal degradation from carriers to be recycled to the plasma membrane. The sequence is that of Transmembrane and coiled-coil domains protein 1 (Tmcc1) from Mus musculus (Mouse).